The primary structure comprises 195 residues: Dephospho-CoA kinase (195 aa).

Residues 4–195 enclose the DPCK domain; sequence IIGLTGGIAS…EQILDALQRL (192 aa). 12–17 lines the ATP pocket; it reads ASGKST.

It belongs to the CoaE family.

The protein resides in the cytoplasm. The catalysed reaction is 3'-dephospho-CoA + ATP = ADP + CoA + H(+). It participates in cofactor biosynthesis; coenzyme A biosynthesis; CoA from (R)-pantothenate: step 5/5. Functionally, catalyzes the phosphorylation of the 3'-hydroxyl group of dephosphocoenzyme A to form coenzyme A. The protein is Dephospho-CoA kinase of Streptococcus agalactiae serotype III (strain NEM316).